A 317-amino-acid chain; its full sequence is tRNA dimethylallyltransferase (317 aa).

An ATP-binding site is contributed by 14 to 21 (GPTAVGKT). Residue 16–21 (TAVGKT) coordinates substrate. Positions 39–42 (DSMQ) are interaction with substrate tRNA.

The protein belongs to the IPP transferase family. In terms of assembly, monomer. Requires Mg(2+) as cofactor.

The catalysed reaction is adenosine(37) in tRNA + dimethylallyl diphosphate = N(6)-dimethylallyladenosine(37) in tRNA + diphosphate. In terms of biological role, catalyzes the transfer of a dimethylallyl group onto the adenine at position 37 in tRNAs that read codons beginning with uridine, leading to the formation of N6-(dimethylallyl)adenosine (i(6)A). This is tRNA dimethylallyltransferase from Bacillus mycoides (strain KBAB4) (Bacillus weihenstephanensis).